Consider the following 224-residue polypeptide: Ribose-5-phosphate isomerase A 2 (224 aa).

Substrate contacts are provided by residues S27–T30, D83–D86, and K96–G99. E105 serves as the catalytic Proton acceptor. K123 is a substrate binding site.

The protein belongs to the ribose 5-phosphate isomerase family. Homodimer.

The enzyme catalyses aldehydo-D-ribose 5-phosphate = D-ribulose 5-phosphate. The protein operates within carbohydrate degradation; pentose phosphate pathway; D-ribose 5-phosphate from D-ribulose 5-phosphate (non-oxidative stage): step 1/1. In terms of biological role, catalyzes the reversible conversion of ribose-5-phosphate to ribulose 5-phosphate. The protein is Ribose-5-phosphate isomerase A 2 of Oceanobacillus iheyensis (strain DSM 14371 / CIP 107618 / JCM 11309 / KCTC 3954 / HTE831).